Here is a 284-residue protein sequence, read N- to C-terminus: Nucleotide-binding protein SPO0713 (284 aa).

3 to 10 (GPSGAGRS) contacts ATP. 50–53 (DARN) is a binding site for GTP.

It belongs to the RapZ-like family.

Its function is as follows. Displays ATPase and GTPase activities. This chain is Nucleotide-binding protein SPO0713, found in Ruegeria pomeroyi (strain ATCC 700808 / DSM 15171 / DSS-3) (Silicibacter pomeroyi).